The following is a 343-amino-acid chain: Pyridoxal 5'-phosphate synthase subunit PDX1 (343 aa).

Asp-73 serves as a coordination point for D-ribose 5-phosphate. Lys-130 functions as the Schiff-base intermediate with D-ribose 5-phosphate in the catalytic mechanism. A D-ribose 5-phosphate-binding site is contributed by Gly-202. Gln-214 is a D-glyceraldehyde 3-phosphate binding site. D-ribose 5-phosphate is bound by residues Gly-263 and 284–285 (GS).

The protein belongs to the PdxS/SNZ family.

It catalyses the reaction aldehydo-D-ribose 5-phosphate + D-glyceraldehyde 3-phosphate + L-glutamine = pyridoxal 5'-phosphate + L-glutamate + phosphate + 3 H2O + H(+). The protein operates within cofactor biosynthesis; pyridoxal 5'-phosphate biosynthesis. Its function is as follows. Catalyzes the formation of pyridoxal 5'-phosphate from ribose 5-phosphate (RBP), glyceraldehyde 3-phosphate (G3P) and ammonia. The ammonia is provided by PDX2. Can also use ribulose 5-phosphate and dihydroxyacetone phosphate as substrates, resulting from enzyme-catalyzed isomerization of RBP and G3P, respectively. Also plays an indirect role in resistance to singlet oxygen-generating photosensitizers. This Cercospora nicotianae (Barn spot disease fungus) protein is Pyridoxal 5'-phosphate synthase subunit PDX1 (PDX1).